We begin with the raw amino-acid sequence, 756 residues long: Protein O-mannosyl-transferase 2 (756 aa).

Transmembrane regions (helical) follow at residues 64–84 (AHVP…TRFY), 110–130 (TFFF…AGYL), 156–176 (AFCA…VLEL), 179–199 (SSTA…CITL), 203–223 (ILLD…MVKF), 245–265 (CLSG…LVGI), and 293–313 (VFGL…IHFI). MIR domains follow at residues 344–400 (PEYL…VKRL), 410–466 (PELV…VEVC), and 471–528 (GDPV…IEDH). 4 helical membrane passes run 602-622 (PVIW…LTVA), 643-663 (LMEG…PFYI), 672-692 (HYFP…DILL), and 713-733 (SVLL…SYGM).

Belongs to the glycosyltransferase 39 family. In terms of tissue distribution, widely expressed. Has particularly strong expression in ovary, testis, liver, brain, muscle, heart and eye.

The protein resides in the endoplasmic reticulum membrane. It catalyses the reaction a di-trans,poly-cis-dolichyl beta-D-mannosyl phosphate + L-seryl-[protein] = 3-O-(alpha-D-mannosyl)-L-seryl-[protein] + a di-trans,poly-cis-dolichyl phosphate + H(+). It carries out the reaction a di-trans,poly-cis-dolichyl beta-D-mannosyl phosphate + L-threonyl-[protein] = 3-O-(alpha-D-mannosyl)-L-threonyl-[protein] + a di-trans,poly-cis-dolichyl phosphate + H(+). The protein operates within protein modification; protein glycosylation. Its function is as follows. Transfers mannosyl residues to the hydroxyl group of serine or threonine residues. Coexpression of both POMT1 and POMT2 is necessary for enzyme activity, expression of either POMT1 or POMT2 alone is insufficient. This Danio rerio (Zebrafish) protein is Protein O-mannosyl-transferase 2.